Consider the following 346-residue polypeptide: UDP-N-acetylenolpyruvoylglucosamine reductase (346 aa).

Residues 17-187 (IESQAYALIE…VAVGFTLKKE (171 aa)) enclose the FAD-binding PCMH-type domain. Arg-163 is a catalytic residue. Ser-233 (proton donor) is an active-site residue. Residue Glu-329 is part of the active site.

The protein belongs to the MurB family. FAD serves as cofactor.

The protein localises to the cytoplasm. It catalyses the reaction UDP-N-acetyl-alpha-D-muramate + NADP(+) = UDP-N-acetyl-3-O-(1-carboxyvinyl)-alpha-D-glucosamine + NADPH + H(+). The protein operates within cell wall biogenesis; peptidoglycan biosynthesis. Cell wall formation. The polypeptide is UDP-N-acetylenolpyruvoylglucosamine reductase (Photobacterium profundum (strain SS9)).